A 301-amino-acid chain; its full sequence is Transcription elongation factor A protein 1 (301 aa).

N-acetylmethionine is present on methionine 1. One can recognise a TFIIS N-terminal domain in the interval 3-80; the sequence is DEVVRIAKKM…KSWKKLLDGP (78 aa). Lysine 55 is covalently cross-linked (Glycyl lysine isopeptide (Lys-Gly) (interchain with G-Cter in ubiquitin)). A phosphoserine mark is found at serine 57, serine 81, serine 97, and serine 100. Over residues 76-93 the composition is skewed to basic and acidic residues; it reads LLDGPSTDKDPEEKKKEP. Residues 76 to 139 are disordered; the sequence is LLDGPSTDKD…FPRAPSTSDS (64 aa). Residues 140-256 enclose the TFIIS central domain; sequence VRLKCREMLA…EHQMAKTGGT (117 aa). The TFIIS-type zinc finger occupies 259 to 299; it reads DLFTCGKCKKKNCTYTQVQTRSADEPMTTFVVCNECGNRWK. Zn(2+)-binding residues include cysteine 263, cysteine 266, cysteine 291, and cysteine 294.

The protein belongs to the TFS-II family. As to quaternary structure, interacts with EAF2. Associates with UBR5 and forms a transcription regulatory complex made of CDK9, Pol II, UBR5 and TCEA1/TFIIS. Part of TBP-based Pol II pre-initiation complex (PIC), in which Pol II core assembles with general transcription factors and other specific initiation factors including GTF2E1, GTF2E2, GTF2F1, GTF2F2, TCEA1, ERCC2, ERCC3, GTF2H2, GTF2H3, GTF2H4, GTF2H5, GTF2A1, GTF2A2, GTF2B and TBP; this large multi-subunit PIC complex mediates DNA unwinding and targets Pol II core to the transcription start site where the first phosphodiester bond forms.

The protein localises to the nucleus. Necessary for efficient RNA polymerase II transcription elongation past template-encoded arresting sites. The arresting sites in DNA have the property of trapping a certain fraction of elongating RNA polymerases that pass through, resulting in locked ternary complexes. Cleavage of the nascent transcript by S-II allows the resumption of elongation from the new 3'-terminus. This Mus musculus (Mouse) protein is Transcription elongation factor A protein 1 (Tcea1).